A 130-amino-acid chain; its full sequence is Small ribosomal subunit protein uS11 (130 aa).

This sequence belongs to the universal ribosomal protein uS11 family. As to quaternary structure, part of the 30S ribosomal subunit. Interacts with proteins S7 and S18. Binds to IF-3.

Functionally, located on the platform of the 30S subunit, it bridges several disparate RNA helices of the 16S rRNA. Forms part of the Shine-Dalgarno cleft in the 70S ribosome. This is Small ribosomal subunit protein uS11 from Campylobacter jejuni subsp. jejuni serotype O:6 (strain 81116 / NCTC 11828).